Reading from the N-terminus, the 545-residue chain is Glucose-6-phosphate isomerase (545 aa).

The active-site Proton donor is glutamate 351. Residues histidine 382 and lysine 510 contribute to the active site.

This sequence belongs to the GPI family.

The protein localises to the cytoplasm. It catalyses the reaction alpha-D-glucose 6-phosphate = beta-D-fructose 6-phosphate. Its pathway is carbohydrate biosynthesis; gluconeogenesis. The protein operates within carbohydrate degradation; glycolysis; D-glyceraldehyde 3-phosphate and glycerone phosphate from D-glucose: step 2/4. In terms of biological role, catalyzes the reversible isomerization of glucose-6-phosphate to fructose-6-phosphate. The chain is Glucose-6-phosphate isomerase from Shewanella loihica (strain ATCC BAA-1088 / PV-4).